The sequence spans 281 residues: MITSAHIDDIRTQVRAWRAKGETVAFVPTMGNLHQGHITLVKEAASKCDHVVASIFVNPMQFGQNEDLDAYPRTLAADSEALTAAGAELLFTPTPAVMYPKGLEQQTYVEVPGISDVLCGASRPGHFRGVATIVCKLFNIVQPDVALFGNKDYQQLLVIKTMVEDLSLPIEIIGVDTIREDSGLAMSSRNGYLTAAEKAAAPALKQAIDAMAAGIKQGESFEQVTEQAKAKLVAAGFTPDYLEIRHAHTLEQAQNQDQALVILAAAYIGKARLIDNLRFDR.

30–37 (MGNLHQGH) serves as a coordination point for ATP. H37 serves as the catalytic Proton donor. Q61 contributes to the (R)-pantoate binding site. A beta-alanine-binding site is contributed by Q61. 149–152 (GNKD) is an ATP binding site. Q155 serves as a coordination point for (R)-pantoate. ATP contacts are provided by residues I178 and 186–189 (MSSR).

The protein belongs to the pantothenate synthetase family. In terms of assembly, homodimer.

Its subcellular location is the cytoplasm. It catalyses the reaction (R)-pantoate + beta-alanine + ATP = (R)-pantothenate + AMP + diphosphate + H(+). It participates in cofactor biosynthesis; (R)-pantothenate biosynthesis; (R)-pantothenate from (R)-pantoate and beta-alanine: step 1/1. Functionally, catalyzes the condensation of pantoate with beta-alanine in an ATP-dependent reaction via a pantoyl-adenylate intermediate. The polypeptide is Pantothenate synthetase (Shewanella baltica (strain OS223)).